The chain runs to 341 residues: Cobalt-precorrin-5B C(1)-methyltransferase (341 aa).

It belongs to the CbiD family.

It carries out the reaction Co-precorrin-5B + S-adenosyl-L-methionine = Co-precorrin-6A + S-adenosyl-L-homocysteine. Its pathway is cofactor biosynthesis; adenosylcobalamin biosynthesis; cob(II)yrinate a,c-diamide from sirohydrochlorin (anaerobic route): step 6/10. Its function is as follows. Catalyzes the methylation of C-1 in cobalt-precorrin-5B to form cobalt-precorrin-6A. The sequence is that of Cobalt-precorrin-5B C(1)-methyltransferase from Picrophilus torridus (strain ATCC 700027 / DSM 9790 / JCM 10055 / NBRC 100828 / KAW 2/3).